A 619-amino-acid chain; its full sequence is Dihydroxy-acid dehydratase (619 aa).

Aspartate 81 is a Mg(2+) binding site. Cysteine 122 lines the [2Fe-2S] cluster pocket. Mg(2+) is bound by residues aspartate 123 and lysine 124. Residue lysine 124 is modified to N6-carboxylysine. A [2Fe-2S] cluster-binding site is contributed by cysteine 195. Residue glutamate 494 coordinates Mg(2+). Serine 520 acts as the Proton acceptor in catalysis.

Belongs to the IlvD/Edd family. As to quaternary structure, homodimer. The cofactor is [2Fe-2S] cluster. Mg(2+) serves as cofactor.

It carries out the reaction (2R)-2,3-dihydroxy-3-methylbutanoate = 3-methyl-2-oxobutanoate + H2O. It catalyses the reaction (2R,3R)-2,3-dihydroxy-3-methylpentanoate = (S)-3-methyl-2-oxopentanoate + H2O. It participates in amino-acid biosynthesis; L-isoleucine biosynthesis; L-isoleucine from 2-oxobutanoate: step 3/4. It functions in the pathway amino-acid biosynthesis; L-valine biosynthesis; L-valine from pyruvate: step 3/4. Its function is as follows. Functions in the biosynthesis of branched-chain amino acids. Catalyzes the dehydration of (2R,3R)-2,3-dihydroxy-3-methylpentanoate (2,3-dihydroxy-3-methylvalerate) into 2-oxo-3-methylpentanoate (2-oxo-3-methylvalerate) and of (2R)-2,3-dihydroxy-3-methylbutanoate (2,3-dihydroxyisovalerate) into 2-oxo-3-methylbutanoate (2-oxoisovalerate), the penultimate precursor to L-isoleucine and L-valine, respectively. The polypeptide is Dihydroxy-acid dehydratase (Shewanella denitrificans (strain OS217 / ATCC BAA-1090 / DSM 15013)).